The chain runs to 613 residues: Dihydroxy-acid dehydratase (613 aa).

Asp81 lines the Mg(2+) pocket. Cys122 provides a ligand contact to [2Fe-2S] cluster. Residues Asp123 and Lys124 each coordinate Mg(2+). At Lys124 the chain carries N6-carboxylysine. A [2Fe-2S] cluster-binding site is contributed by Cys193. Position 489 (Glu489) interacts with Mg(2+). Ser515 acts as the Proton acceptor in catalysis.

Belongs to the IlvD/Edd family. As to quaternary structure, homodimer. The cofactor is [2Fe-2S] cluster. Mg(2+) is required as a cofactor.

The enzyme catalyses (2R)-2,3-dihydroxy-3-methylbutanoate = 3-methyl-2-oxobutanoate + H2O. It carries out the reaction (2R,3R)-2,3-dihydroxy-3-methylpentanoate = (S)-3-methyl-2-oxopentanoate + H2O. Its pathway is amino-acid biosynthesis; L-isoleucine biosynthesis; L-isoleucine from 2-oxobutanoate: step 3/4. The protein operates within amino-acid biosynthesis; L-valine biosynthesis; L-valine from pyruvate: step 3/4. Its function is as follows. Functions in the biosynthesis of branched-chain amino acids. Catalyzes the dehydration of (2R,3R)-2,3-dihydroxy-3-methylpentanoate (2,3-dihydroxy-3-methylvalerate) into 2-oxo-3-methylpentanoate (2-oxo-3-methylvalerate) and of (2R)-2,3-dihydroxy-3-methylbutanoate (2,3-dihydroxyisovalerate) into 2-oxo-3-methylbutanoate (2-oxoisovalerate), the penultimate precursor to L-isoleucine and L-valine, respectively. This Pseudomonas putida (strain ATCC 700007 / DSM 6899 / JCM 31910 / BCRC 17059 / LMG 24140 / F1) protein is Dihydroxy-acid dehydratase.